The sequence spans 247 residues: Probable transcriptional regulatory protein Glov_1245 (247 aa).

Belongs to the TACO1 family.

It is found in the cytoplasm. The protein is Probable transcriptional regulatory protein Glov_1245 of Trichlorobacter lovleyi (strain ATCC BAA-1151 / DSM 17278 / SZ) (Geobacter lovleyi).